Reading from the N-terminus, the 683-residue chain is Protein hook (683 aa).

A Calponin-homology (CH) domain is found at 5 to 123 (NGMYYSLLEW…RLLQLVLGCA (119 aa)). Coiled-coil stretches lie at residues 135-440 (EIMC…LKCG) and 484-594 (QTAL…AKEV).

It belongs to the hook family. As to quaternary structure, homodimer. Interacts with microtubules via its N-terminus.

It is found in the cytoplasm. The protein localises to the cytoskeleton. The protein resides in the endosome. It localises to the synapse. Its function is as follows. Involved in endocytic trafficking by stabilizing organelles of the endocytic pathway. Probably acts as a cytoskeletal linker protein required to tether endosome vesicles to the cytoskeleton. Involved in modulation of endocytosis at stages required for down-regulation of membrane proteins that control synapse size. Not involved in synaptic vesicle recycling. Required in R7 cells for boss endocytosis into multivesicular bodies (MVBs). Has a role in regulating adult longevity. This is Protein hook from Drosophila grimshawi (Hawaiian fruit fly).